The primary structure comprises 934 residues: Bifunctional uridylyltransferase/uridylyl-removing enzyme (934 aa).

Positions 1 to 379 (MSAHDLKLEE…TFSRRKRKLS (379 aa)) are uridylyltransferase. The uridylyl-removing stretch occupies residues 380-736 (DDGAFISENH…AKPHAFEAVT (357 aa)). An HD domain is found at 496 to 613 (VDEHLLRCIA…IDFADTVQTM (118 aa)). ACT domains lie at 737–818 (EITV…DMLA) and 848–931 (VIEV…RSPQ).

It belongs to the GlnD family. Requires Mg(2+) as cofactor.

It catalyses the reaction [protein-PII]-L-tyrosine + UTP = [protein-PII]-uridylyl-L-tyrosine + diphosphate. It carries out the reaction [protein-PII]-uridylyl-L-tyrosine + H2O = [protein-PII]-L-tyrosine + UMP + H(+). With respect to regulation, uridylyltransferase (UTase) activity is inhibited by glutamine, while glutamine activates uridylyl-removing (UR) activity. In terms of biological role, modifies, by uridylylation and deuridylylation, the PII regulatory proteins (GlnB and homologs), in response to the nitrogen status of the cell that GlnD senses through the glutamine level. Under low glutamine levels, catalyzes the conversion of the PII proteins and UTP to PII-UMP and PPi, while under higher glutamine levels, GlnD hydrolyzes PII-UMP to PII and UMP (deuridylylation). Thus, controls uridylylation state and activity of the PII proteins, and plays an important role in the regulation of nitrogen assimilation and metabolism. In Brucella melitensis biotype 2 (strain ATCC 23457), this protein is Bifunctional uridylyltransferase/uridylyl-removing enzyme.